We begin with the raw amino-acid sequence, 147 residues long: uncharacterized protein (147 aa).

The 147-residue stretch at 1–147 (MEIRRADKDD…RPESGGSGSE (147 aa)) folds into the N-acetyltransferase domain.

It belongs to the acetyltransferase family.

This is an uncharacterized protein from Archaeoglobus fulgidus (strain ATCC 49558 / DSM 4304 / JCM 9628 / NBRC 100126 / VC-16).